We begin with the raw amino-acid sequence, 1456 residues long: Ig-like and fibronectin type-III domain-containing protein C27B7.7 (1456 aa).

The N-terminal stretch at 1-16 (MISLSLVLLLLFGVRC) is a signal peptide. 2 Fibronectin type-III domains span residues 24–128 (NDDS…SINT) and 132–227 (IPKA…TNST). Asn64, Asn146, Asn164, Asn198, and Asn225 each carry an N-linked (GlcNAc...) asparagine glycan. The region spanning 236–322 (PDEEYTADPQ…DAGDSSKEVN (87 aa)) is the Ig-like 1 domain. Residues Cys254 and Cys308 are joined by a disulfide bond. Positions 328-426 (PGSPPSEITL…VAMERDTQPI (99 aa)) constitute a Fibronectin type-III 3 domain. Asn471, Asn497, and Asn517 each carry an N-linked (GlcNAc...) asparagine glycan. 3 consecutive Fibronectin type-III domains span residues 531 to 631 (APTQ…TLNG), 636 to 736 (PPDN…TAYS), and 737 to 846 (EVPI…WFRT). Residues Asn658, Asn691, and Asn692 are each glycosylated (N-linked (GlcNAc...) asparagine). Residues 841 to 948 (PRWFRTGHGK…GSSSASVEIR (108 aa)) form the Ig-like 2 domain. A disulfide bond links Cys877 and Cys932. Residues Asn893, Asn898, Asn969, Asn1091, Asn1120, Asn1133, Asn1151, Asn1207, Asn1268, Asn1277, Asn1298, Asn1350, Asn1357, and Asn1382 are each glycosylated (N-linked (GlcNAc...) asparagine). A Fibronectin type-III 7 domain is found at 955–1050 (PPENIILTAY…SCISDVLYET (96 aa)). Fibronectin type-III domains are found at residues 1148–1234 (APTN…TPNG), 1236–1343 (PKTA…ISFD), and 1347–1438 (VIDN…SSPS). Residues 1419-1456 (LGRESPPSEEIDLEFISSPSPTPIISGSRRKVIKEPPL) form a disordered region. Low complexity predominate over residues 1434 to 1445 (ISSPSPTPIISG).

It localises to the secreted. This Caenorhabditis elegans protein is Ig-like and fibronectin type-III domain-containing protein C27B7.7.